The primary structure comprises 164 residues: T-cell surface glycoprotein CD3 zeta chain (164 aa).

The first 21 residues, 1–21 (MKWKALFTAAILQAQLPITEA), serve as a signal peptide directing secretion. Over 22 to 30 (QSFGLLDPK) the chain is Extracellular. The helical transmembrane segment at 31 to 51 (LCYLLDGILFIYGVILTALFL) threads the bilayer. The Cytoplasmic segment spans residues 52-164 (RVKFSRSADA…ALHMQALPPR (113 aa)). Phosphoserine is present on serine 58. 3 consecutive ITAM domains span residues 61–89 (APAY…LDKR), 100–128 (PQRR…EIGM), and 131–159 (ERRR…LHMQ). Residues tyrosine 64, tyrosine 72, tyrosine 83, tyrosine 111, tyrosine 123, tyrosine 142, and tyrosine 153 each carry the phosphotyrosine modification. Residues 83-96 (YDVLDKRRGRDPEM) are compositionally biased toward basic and acidic residues. The tract at residues 83-111 (YDVLDKRRGRDPEMGGKPQRRKNPQEGLY) is disordered. Positions 128–154 (MKGERRRGKGHDGLYQGLSTATKDTYD) are disordered.

This sequence belongs to the CD3Z/FCER1G family. As to quaternary structure, the TCR-CD3 complex is composed of a CD3D/CD3E and a CD3G/CD3E heterodimers that preferentially associate with TCRalpha and TCRbeta, respectively, to form TCRalpha/CD3E/CD3G and TCRbeta/CD3G/CD3E trimers. In turn, the hexamer interacts with CD3Z homodimer to form the TCR-CD3 complex. Alternatively, TCRalpha and TCRbeta can be replaced by TCRgamma and TCRdelta. Interacts with SLA. Interacts with TRAT1. Interacts with DOCK2. Interacts with SLA2. Interacts with SHB. Interacts with ZAP70. Interacts (tyrosine phosphorylated) with SHC1 (via SH2 domain). Interacts with PTPRC. Interacts with CRK; this interaction regulates CD3Z phosphorylation. Interacts (on T cell side) with CD81, ICAM1 and CD9 at immunological synapses between antigen-presenting cells and T cells. Interacts with CD160. Interacts with LY6E. The signaling subunit of immunoglobulin gamma (IgG) Fc receptor complex. As a homodimer or a heterodimer with FCER1G, associates with the ligand binding subunit FCGR3A (via transmembrane domain); this interaction is a prerequisite for Fc receptor complex expression on the cell surface. Interacts with CD5. In terms of assembly, (Microbial infection) Interacts with HIV-1 Nef; this interaction up-regulates the expression of the Fas ligand (FASLG) at the cell surface. (Microbial infection) Interacts with HIV-2 Nef protein; this interaction induces down-regulation of cell surface TCR/CD3 complexes. Post-translationally, phosphorylated on Tyr residues after T-cell receptor triggering by LCK in association with CD4/CD8. In terms of tissue distribution, CD3Z is expressed in normal lymphoid tissue and in peripheral blood mononuclear cells (PBMCs).

It localises to the cell membrane. Functionally, part of the TCR-CD3 complex present on T-lymphocyte cell surface that plays an essential role in adaptive immune response. When antigen presenting cells (APCs) activate T-cell receptor (TCR), TCR-mediated signals are transmitted across the cell membrane by the CD3 chains CD3D, CD3E, CD3G and CD3Z. All CD3 chains contain immunoreceptor tyrosine-based activation motifs (ITAMs) in their cytoplasmic domain. Upon TCR engagement, these motifs become phosphorylated by Src family protein tyrosine kinases LCK and FYN, resulting in the activation of downstream signaling pathways. CD3Z ITAMs phosphorylation creates multiple docking sites for the protein kinase ZAP70 leading to ZAP70 phosphorylation and its conversion into a catalytically active enzyme. Plays an important role in intrathymic T-cell differentiation. Additionally, participates in the activity-dependent synapse formation of retinal ganglion cells (RGCs) in both the retina and dorsal lateral geniculate nucleus (dLGN). This chain is T-cell surface glycoprotein CD3 zeta chain (CD247), found in Homo sapiens (Human).